The chain runs to 61 residues: DGYILMRNGCKIPCLFGNDGCNKECKAYGGSYGYCWTYGLACACEGQPEDKKHLNYHKKTC.

The LCN-type CS-alpha/beta domain maps to 1-61; it reads DGYILMRNGC…KHLNYHKKTC (61 aa). Disulfide bonds link Cys10/Cys61, Cys14/Cys35, Cys21/Cys42, and Cys25/Cys44.

The protein belongs to the long (4 C-C) scorpion toxin superfamily. Sodium channel inhibitor family. Beta subfamily. Expressed by the venom gland.

It localises to the secreted. Its function is as follows. Depressant insect beta-toxins cause a transient contraction paralysis followed by a slow flaccid paralysis. They bind voltage-independently at site-4 of sodium channels (Nav) and shift the voltage of activation toward more negative potentials thereby affecting sodium channel activation and promoting spontaneous and repetitive firing. This toxin is active only on insects and causes a transient contraction paralysis followed by a slow flaccid paralysis. In Hottentotta tamulus sindicus (Scorpion), this protein is Insect toxin BsIT1.